The chain runs to 480 residues: Probable cobyric acid synthase (480 aa).

The region spanning 246 to 431 is the GATase cobBQ-type domain; it reads PVRIAVIRLP…MHGLFLNPSA (186 aa). The active-site Nucleophile is the Cys-325. His-423 is an active-site residue.

It belongs to the CobB/CobQ family. CobQ subfamily.

The protein operates within cofactor biosynthesis; adenosylcobalamin biosynthesis. Functionally, catalyzes amidations at positions B, D, E, and G on adenosylcobyrinic A,C-diamide. NH(2) groups are provided by glutamine, and one molecule of ATP is hydrogenolyzed for each amidation. This is Probable cobyric acid synthase from Methanoregula boonei (strain DSM 21154 / JCM 14090 / 6A8).